Reading from the N-terminus, the 155-residue chain is Probable Brix domain-containing ribosomal biogenesis protein (155 aa).

The 155-residue stretch at 1–155 folds into the Brix domain; it reads MLITSSRKPS…KNYRKMVMSE (155 aa).

Functionally, probably involved in the biogenesis of the ribosome. This Methanococcoides burtonii (strain DSM 6242 / NBRC 107633 / OCM 468 / ACE-M) protein is Probable Brix domain-containing ribosomal biogenesis protein.